A 454-amino-acid polypeptide reads, in one-letter code: Mitochondrial dynamics protein MID49 (454 aa).

Topologically, residues methionine 1 to aspartate 22 are mitochondrial intermembrane. Residues phenylalanine 23–alanine 43 form a helical membrane-spanning segment. Residues threonine 44–leucine 454 are Cytoplasmic-facing. The disordered stretch occupies residues alanine 76–serine 119. A compositionally biased stretch (low complexity) spans alanine 88–lysine 108.

This sequence belongs to the MID49/MID51 family. As to quaternary structure, interacts with DNM1L.

Its subcellular location is the mitochondrion outer membrane. Mitochondrial outer membrane protein which regulates mitochondrial organization. It is required for mitochondrial fission and promotes the recruitment and association of the fission mediator dynamin-related protein 1 (DNM1L) to the mitochondrial surface independently of the mitochondrial fission FIS1 and MFF proteins. Regulates DNM1L GTPase activity. The sequence is that of Mitochondrial dynamics protein MID49 (MIEF2) from Pongo abelii (Sumatran orangutan).